Reading from the N-terminus, the 563-residue chain is Arginine--tRNA ligase (563 aa).

Residues 121–131 (PNIAKPFSIGH) carry the 'HIGH' region motif.

It belongs to the class-I aminoacyl-tRNA synthetase family. As to quaternary structure, monomer.

The protein localises to the cytoplasm. It catalyses the reaction tRNA(Arg) + L-arginine + ATP = L-arginyl-tRNA(Arg) + AMP + diphosphate. This Streptococcus pyogenes serotype M3 (strain ATCC BAA-595 / MGAS315) protein is Arginine--tRNA ligase.